Reading from the N-terminus, the 319-residue chain is MDLLFLGTSAGVPTKARNVSATAVIETNGSHWYLVDCGEGTQHRLLHTPLSIRDLRAIFITHVHGDHCFGLPGLLASAGMSGRTQPLELILPVALHDWVRQGLVASDTFLPFELRLLAVEELAEWRNEALQVTTVQLSHRVPSVGFVFTELNPEPRLDTQRLQAEGIPRGPLWGELAKGLTVQHDGQLLDGHDYLRPSRPPRRVIVCGDNDNPELLADVAKGADVLVHEATFTQAVVERTGVTFGHSTAAAVARFAEGAGVRNLVLTHFSARYQSDPRRSPNIDNVRDEALAHYSGQLTLAQDLQRYHLGRDGCLEPVG.

Residues H62, H64, D66, H67, H139, D209, and H268 each coordinate Zn(2+). D66 (proton acceptor) is an active-site residue.

This sequence belongs to the RNase Z family. Homodimer. Requires Zn(2+) as cofactor.

It carries out the reaction Endonucleolytic cleavage of RNA, removing extra 3' nucleotides from tRNA precursor, generating 3' termini of tRNAs. A 3'-hydroxy group is left at the tRNA terminus and a 5'-phosphoryl group is left at the trailer molecule.. Its function is as follows. Zinc phosphodiesterase, which displays some tRNA 3'-processing endonuclease activity. Probably involved in tRNA maturation, by removing a 3'-trailer from precursor tRNA. This Pseudomonas putida (strain GB-1) protein is Ribonuclease Z.